Here is a 283-residue protein sequence, read N- to C-terminus: Formamidopyrimidine-DNA glycosylase (283 aa).

Pro-2 functions as the Schiff-base intermediate with DNA in the catalytic mechanism. Glu-3 acts as the Proton donor in catalysis. Lys-58 functions as the Proton donor; for beta-elimination activity in the catalytic mechanism. Residues His-100, Arg-119, and Arg-162 each coordinate DNA. An FPG-type zinc finger spans residues 247–283; that stretch reads RVYGREGQPCVTPGCRGLVGRIVQSGRSSFHCPECQR. The active-site Proton donor; for delta-elimination activity is Arg-273.

This sequence belongs to the FPG family. In terms of assembly, monomer. Zn(2+) serves as cofactor.

It catalyses the reaction Hydrolysis of DNA containing ring-opened 7-methylguanine residues, releasing 2,6-diamino-4-hydroxy-5-(N-methyl)formamidopyrimidine.. It carries out the reaction 2'-deoxyribonucleotide-(2'-deoxyribose 5'-phosphate)-2'-deoxyribonucleotide-DNA = a 3'-end 2'-deoxyribonucleotide-(2,3-dehydro-2,3-deoxyribose 5'-phosphate)-DNA + a 5'-end 5'-phospho-2'-deoxyribonucleoside-DNA + H(+). In terms of biological role, involved in base excision repair of DNA damaged by oxidation or by mutagenic agents. Acts as a DNA glycosylase that recognizes and removes damaged bases. Has a preference for oxidized purines, such as 7,8-dihydro-8-oxoguanine (8-oxoG). Has AP (apurinic/apyrimidinic) lyase activity and introduces nicks in the DNA strand. Cleaves the DNA backbone by beta-delta elimination to generate a single-strand break at the site of the removed base with both 3'- and 5'-phosphates. In Cereibacter sphaeroides (strain ATCC 17025 / ATH 2.4.3) (Rhodobacter sphaeroides), this protein is Formamidopyrimidine-DNA glycosylase.